Consider the following 311-residue polypeptide: Dof zinc finger protein DOF1.4 (311 aa).

The span at 1–12 (MQSKNMIVASSH) shows a compositional bias: polar residues. A disordered region spans residues 1–29 (MQSKNMIVASSHQQQQQQQPQQPQPQLKC). Over residues 13 to 26 (QQQQQQQPQQPQPQ) the composition is skewed to low complexity. Residues 27–81 (LKCPRCDSSNTKFCYYNNYSLSQPRHFCKACKRYWTRGGTLRNVPVGGSYRKNKR) form a Dof-type zinc finger. Positions 29, 32, 54, and 57 each coordinate Zn(2+). The segment at 72-110 (VGGSYRKNKRVKRPSTATTTTASTVSTTNSSSPNNPHQI) is disordered. A compositionally biased stretch (low complexity) spans 85-107 (PSTATTTTASTVSTTNSSSPNNP).

The protein resides in the nucleus. Its function is as follows. Transcription factor that binds specifically to a 5'-AA[AG]G-3' consensus core sequence. The chain is Dof zinc finger protein DOF1.4 (DOF1.4) from Arabidopsis thaliana (Mouse-ear cress).